Here is a 1345-residue protein sequence, read N- to C-terminus: DNA-directed RNA polymerase subunit beta (1345 aa).

It belongs to the RNA polymerase beta chain family. As to quaternary structure, the RNAP catalytic core consists of 2 alpha, 1 beta, 1 beta' and 1 omega subunit. When a sigma factor is associated with the core the holoenzyme is formed, which can initiate transcription.

It carries out the reaction RNA(n) + a ribonucleoside 5'-triphosphate = RNA(n+1) + diphosphate. Its function is as follows. DNA-dependent RNA polymerase catalyzes the transcription of DNA into RNA using the four ribonucleoside triphosphates as substrates. The sequence is that of DNA-directed RNA polymerase subunit beta from Shewanella oneidensis (strain ATCC 700550 / JCM 31522 / CIP 106686 / LMG 19005 / NCIMB 14063 / MR-1).